The chain runs to 273 residues: 4-hydroxy-tetrahydrodipicolinate reductase (273 aa).

NAD(+) is bound by residues 12 to 17 (GAGGRM) and Glu38. Arg39 lines the NADP(+) pocket. NAD(+)-binding positions include 102 to 104 (GTT) and 126 to 129 (AANF). His159 (proton donor/acceptor) is an active-site residue. Residue His160 participates in (S)-2,3,4,5-tetrahydrodipicolinate binding. Lys163 serves as the catalytic Proton donor. 169-170 (GT) provides a ligand contact to (S)-2,3,4,5-tetrahydrodipicolinate.

This sequence belongs to the DapB family. Homotetramer.

It localises to the cytoplasm. It catalyses the reaction (S)-2,3,4,5-tetrahydrodipicolinate + NAD(+) + H2O = (2S,4S)-4-hydroxy-2,3,4,5-tetrahydrodipicolinate + NADH + H(+). It carries out the reaction (S)-2,3,4,5-tetrahydrodipicolinate + NADP(+) + H2O = (2S,4S)-4-hydroxy-2,3,4,5-tetrahydrodipicolinate + NADPH + H(+). It functions in the pathway amino-acid biosynthesis; L-lysine biosynthesis via DAP pathway; (S)-tetrahydrodipicolinate from L-aspartate: step 4/4. Catalyzes the conversion of 4-hydroxy-tetrahydrodipicolinate (HTPA) to tetrahydrodipicolinate. This chain is 4-hydroxy-tetrahydrodipicolinate reductase, found in Proteus mirabilis (strain HI4320).